The primary structure comprises 251 residues: Uridylate kinase (251 aa).

Lysine 11–glycine 14 is an ATP binding site. Positions glycine 19–glycine 24 are involved in allosteric activation by GTP. Glycine 53 lines the UMP pocket. 2 residues coordinate ATP: glycine 54 and arginine 58. Residues aspartate 73 and threonine 134–threonine 141 each bind UMP. ATP contacts are provided by threonine 161, tyrosine 167, and aspartate 170.

The protein belongs to the UMP kinase family. Homohexamer.

It is found in the cytoplasm. The catalysed reaction is UMP + ATP = UDP + ADP. It functions in the pathway pyrimidine metabolism; CTP biosynthesis via de novo pathway; UDP from UMP (UMPK route): step 1/1. With respect to regulation, allosterically activated by GTP. Inhibited by UTP. Catalyzes the reversible phosphorylation of UMP to UDP. The protein is Uridylate kinase of Protochlamydia amoebophila (strain UWE25).